A 208-amino-acid polypeptide reads, in one-letter code: GTP cyclohydrolase-2 (208 aa).

49–53 (RLHSE) contacts GTP. Zn(2+) contacts are provided by cysteine 54, cysteine 65, and cysteine 67. Residues glutamine 70, 92–94 (EGR), and threonine 114 each bind GTP. Aspartate 126 serves as the catalytic Proton acceptor. The Nucleophile role is filled by arginine 128. The GTP site is built by threonine 149 and lysine 154.

This sequence belongs to the GTP cyclohydrolase II family. It depends on Zn(2+) as a cofactor.

It carries out the reaction GTP + 4 H2O = 2,5-diamino-6-hydroxy-4-(5-phosphoribosylamino)-pyrimidine + formate + 2 phosphate + 3 H(+). Its pathway is cofactor biosynthesis; riboflavin biosynthesis; 5-amino-6-(D-ribitylamino)uracil from GTP: step 1/4. Catalyzes the conversion of GTP to 2,5-diamino-6-ribosylamino-4(3H)-pyrimidinone 5'-phosphate (DARP), formate and pyrophosphate. This chain is GTP cyclohydrolase-2, found in Azotobacter vinelandii (strain DJ / ATCC BAA-1303).